Consider the following 1167-residue polypeptide: DNA-directed RNA polymerase subunit beta (1167 aa).

The protein belongs to the RNA polymerase beta chain family. As to quaternary structure, the RNAP catalytic core consists of 2 alpha, 1 beta, 1 beta' and 1 omega subunit. When a sigma factor is associated with the core the holoenzyme is formed, which can initiate transcription.

It carries out the reaction RNA(n) + a ribonucleoside 5'-triphosphate = RNA(n+1) + diphosphate. Its function is as follows. DNA-dependent RNA polymerase catalyzes the transcription of DNA into RNA using the four ribonucleoside triphosphates as substrates. The protein is DNA-directed RNA polymerase subunit beta of Treponema denticola (strain ATCC 35405 / DSM 14222 / CIP 103919 / JCM 8153 / KCTC 15104).